Consider the following 146-residue polypeptide: Interleukin-3 (146 aa).

The signal sequence occupies residues 1–17; that stretch reads MSSLSILHLLLLLLSLH. Asn-65 carries N-linked (GlcNAc...) asparagine glycosylation.

The protein belongs to the IL-3 family. Monomer. Activated T-cells, mast cells, natural killer cells.

It is found in the secreted. In terms of biological role, granulocyte/macrophage colony-stimulating factors are cytokines that act in hematopoiesis by controlling the production, differentiation, and function of 2 related white cell populations of the blood, the granulocytes and the monocytes-macrophages. Functionally, this CSF induces granulocytes, macrophages, mast cells, stem cells, erythroid cells, eosinophils and megakaryocytes. This is Interleukin-3 (IL3) from Ovis aries (Sheep).